We begin with the raw amino-acid sequence, 170 residues long: Archaemetzincin (170 aa).

His-110 provides a ligand contact to Zn(2+). The active-site Proton acceptor is Glu-111. Positions 114, 120, 121, 125, 144, and 147 each coordinate Zn(2+).

It belongs to the peptidase M54 family. As to quaternary structure, monomer. The cofactor is Zn(2+).

Probable zinc metalloprotease whose natural substrate is unknown. This chain is Archaemetzincin, found in Nanoarchaeum equitans (strain Kin4-M).